The sequence spans 125 residues: Meiotically up-regulated gene 112 protein (125 aa).

Its subcellular location is the golgi apparatus. Has a role in meiosis. The protein is Meiotically up-regulated gene 112 protein (mug112) of Schizosaccharomyces pombe (strain 972 / ATCC 24843) (Fission yeast).